Here is a 313-residue protein sequence, read N- to C-terminus: WD repeat-containing protein 82 (313 aa).

6 WD repeats span residues 19–58 (ENSD…PKRT), 105–144 (GHSK…CQGL), 146–184 (HLQG…KGPF), 192–231 (DRTC…VMHT), 236–276 (ANSK…KVAV), and 280–313 (KHTG…TIDD).

It belongs to the WD repeat SWD2 family. Component of the SET1/COMPASS complex, at least composed of the catalytic subunit (SETD1A or SETD1B), WDR5, WDR82, RBBP5, ASH2L/ASH2, CXXC1/CFP1, HCFC1 and DPY30. Component of the PNUTS-PP1 phosphatase complex, composed of PPP1R10/PNUTS, TOX4, WDR82, and PPP1CA or PPP1CB or PPP1CC. Associated with multiple protein complexes including an RNA polymerase II complex, MLL3/MLL4 complex and a chaperonin-containing TCP1 complex. Interacts with SETD1B (via N-terminal region); the interaction is direct. Interacts with SETD1A (via N-terminal region); the interaction is direct. Interacts with CUL4B. Interacts with RBBP5. Interacts with POLR2B. Interacts with hyperphosphorylated C-terminal domain (CTD) of RNA polymerase II large subunit (POLR2A). Binds specifically to CTD heptad repeats phosphorylated on 'Ser-5' of each heptad. SETD1A enhances its interaction with POLR2A. Interacts with PPP1R10/PNUTS. Interacts with PPP1CA in the presence of PPP1R10/PNUTS. Interacts with ZC3H4; interaction is independent of the SET1 complex and promotes transcription termination of long non-coding RNAs (lncRNAs).

The protein resides in the nucleus. It localises to the chromosome. The protein localises to the cytoplasm. In terms of biological role, regulatory component of the SET1/COMPASS complex implicated in the tethering of this complex to transcriptional start sites of active genes. Facilitates histone H3 'Lys-4' methylation (H3K4me) via recruitment of the SETD1A or SETD1B to the 'Ser-5' phosphorylated C-terminal domain (CTD) of RNA polymerase II large subunit (POLR2A). Component of the PNUTS-PP1 protein phosphatase complex, a protein phosphatase 1 (PP1) complex that promotes RNA polymerase II transcription pause-release, allowing transcription elongation. PNUTS-PP1 also plays a role in the control of chromatin structure and cell cycle progression during the transition from mitosis into interphase. Together with ZC3H4, but independently of the SET1 complex, part of a transcription termination checkpoint that promotes transcription termination of long non-coding RNAs (lncRNAs). The transcription termination checkpoint is activated by the inefficiently spliced first exon of lncRNAs and promotes transcription termination of lncRNAs and their subsequent degradation by the exosome. The polypeptide is WD repeat-containing protein 82 (Homo sapiens (Human)).